Here is a 177-residue protein sequence, read N- to C-terminus: Calcineurin subunit B (177 aa).

EF-hand domains lie at 25-60 (KEIKKLYKRFKKLDKDGNGTISKDEFLMIPELAVNP), 62-92 (VKRVISIFDENGDGSVNFKEFIAALSVFNAQ), 94-129 (DKQRKLEFAFKVYDIDGDGYISNGELFTVLKMMVGN), and 135-170 (QLQQIVDKTILEADEDGDGKISFEEFAKTLSHQDLE). Ca(2+)-binding residues include aspartate 38, aspartate 40, asparagine 42, threonine 44, glutamate 49, aspartate 70, asparagine 72, aspartate 74, serine 76, glutamate 81, aspartate 107, aspartate 109, aspartate 111, tyrosine 113, glutamate 118, aspartate 148, aspartate 150, aspartate 152, lysine 154, and glutamate 159.

It belongs to the calcineurin regulatory subunit family. In terms of assembly, composed of a catalytic subunit (A) and a regulatory subunit (B).

Functionally, regulatory subunit of calcineurin, a calcium-dependent, calmodulin stimulated protein phosphatase. Confers calcium sensitivity. In Naegleria gruberi (Amoeba), this protein is Calcineurin subunit B (CNB1).